We begin with the raw amino-acid sequence, 239 residues long: Homeobox-leucine zipper protein HOX12 (239 aa).

The segment at 22 to 65 is disordered; sequence PEAATSGGEQKKARQRRRRKVKPEAAAALAGESGGDEQAKKRRL. Residues 58–117 constitute a DNA-binding region (homeobox); sequence EQAKKRRLSDEQARFLEMSFKKERKLETPRKVQLAAELGLDAKQVAVWFQNRRARHKSKL. Residues 107-168 are a coiled coil; the sequence is QNRRARHKSK…KLAAVAAATT (62 aa).

This sequence belongs to the HD-ZIP homeobox family. Class I subfamily. As to expression, expressed in seedlings, roots, stems, leaf sheaths and panicles.

It localises to the nucleus. Its function is as follows. Probable transcription factor. This Oryza sativa subsp. indica (Rice) protein is Homeobox-leucine zipper protein HOX12 (HOX12).